The primary structure comprises 157 residues: Transcription elongation factor GreA (157 aa).

This sequence belongs to the GreA/GreB family.

Functionally, necessary for efficient RNA polymerase transcription elongation past template-encoded arresting sites. The arresting sites in DNA have the property of trapping a certain fraction of elongating RNA polymerases that pass through, resulting in locked ternary complexes. Cleavage of the nascent transcript by cleavage factors such as GreA or GreB allows the resumption of elongation from the new 3'terminus. GreA releases sequences of 2 to 3 nucleotides. The chain is Transcription elongation factor GreA from Brucella abortus (strain S19).